The chain runs to 426 residues: Dihydrofolate synthase/folylpolyglutamate synthase (426 aa).

G58 to S61 contributes to the ATP binding site. Position 82 (S82) interacts with Mg(2+). Residue T121–E124 coordinates 7,8-dihydropteroate. Mg(2+) is bound at residue E145. Position 152–154 (L152–A154) interacts with 7,8-dihydropteroate. Residue H172 participates in Mg(2+) binding. Positions 289 and 302 each coordinate ATP.

The protein belongs to the folylpolyglutamate synthase family. Monomer. Mg(2+) serves as cofactor.

It carries out the reaction 7,8-dihydropteroate + L-glutamate + ATP = 7,8-dihydrofolate + ADP + phosphate + H(+). The enzyme catalyses (6S)-5,6,7,8-tetrahydrofolyl-(gamma-L-Glu)(n) + L-glutamate + ATP = (6S)-5,6,7,8-tetrahydrofolyl-(gamma-L-Glu)(n+1) + ADP + phosphate + H(+). The catalysed reaction is 10-formyltetrahydrofolyl-(gamma-L-Glu)(n) + L-glutamate + ATP = 10-formyltetrahydrofolyl-(gamma-L-Glu)(n+1) + ADP + phosphate + H(+). It catalyses the reaction (6R)-5,10-methylenetetrahydrofolyl-(gamma-L-Glu)(n) + L-glutamate + ATP = (6R)-5,10-methylenetetrahydrofolyl-(gamma-L-Glu)(n+1) + ADP + phosphate + H(+). The protein operates within cofactor biosynthesis; tetrahydrofolate biosynthesis; 7,8-dihydrofolate from 2-amino-4-hydroxy-6-hydroxymethyl-7,8-dihydropteridine diphosphate and 4-aminobenzoate: step 2/2. Its pathway is cofactor biosynthesis; tetrahydrofolylpolyglutamate biosynthesis. Functions in two distinct reactions of the de novo folate biosynthetic pathway. Catalyzes the addition of a glutamate residue to dihydropteroate (7,8-dihydropteroate or H2Pte) to form dihydrofolate (7,8-dihydrofolate monoglutamate or H2Pte-Glu). Also catalyzes successive additions of L-glutamate to tetrahydrofolate or 10-formyltetrahydrofolate or 5,10-methylenetetrahydrofolate, leading to folylpolyglutamate derivatives. In Buchnera aphidicola subsp. Baizongia pistaciae (strain Bp), this protein is Dihydrofolate synthase/folylpolyglutamate synthase (folC).